Consider the following 240-residue polypeptide: ATP synthase subunit a (240 aa).

A run of 5 helical transmembrane segments spans residues 21 to 41 (LSNL…CVWG), 78 to 98 (IFLP…LIGV), 116 to 136 (DAVM…YYGI), 183 to 203 (ILLS…FGAA), and 212 to 232 (FSVF…MVYM).

Belongs to the ATPase A chain family. In terms of assembly, F-type ATPases have 2 components, CF(1) - the catalytic core - and CF(0) - the membrane proton channel. CF(1) has five subunits: alpha(3), beta(3), gamma(1), delta(1), epsilon(1). CF(0) has three main subunits: a(1), b(2) and c(9-12). The alpha and beta chains form an alternating ring which encloses part of the gamma chain. CF(1) is attached to CF(0) by a central stalk formed by the gamma and epsilon chains, while a peripheral stalk is formed by the delta and b chains.

The protein localises to the cell membrane. Its function is as follows. Key component of the proton channel; it plays a direct role in the translocation of protons across the membrane. This Oceanobacillus iheyensis (strain DSM 14371 / CIP 107618 / JCM 11309 / KCTC 3954 / HTE831) protein is ATP synthase subunit a.